Consider the following 363-residue polypeptide: Protein-glutamate methylesterase/protein-glutamine glutaminase 3 (363 aa).

A Response regulatory domain is found at Lys-8–Lys-125. Position 59 is a 4-aspartylphosphate (Asp-59). The CheB-type methylesterase domain maps to Leu-164–Met-356. Residues Ser-176, His-202, and Asp-298 contribute to the active site.

The protein belongs to the CheB family. Phosphorylated by CheA. Phosphorylation of the N-terminal regulatory domain activates the methylesterase activity.

It localises to the cytoplasm. It catalyses the reaction [protein]-L-glutamate 5-O-methyl ester + H2O = L-glutamyl-[protein] + methanol + H(+). The catalysed reaction is L-glutaminyl-[protein] + H2O = L-glutamyl-[protein] + NH4(+). Functionally, involved in chemotaxis. Part of a chemotaxis signal transduction system that modulates chemotaxis in response to various stimuli. Catalyzes the demethylation of specific methylglutamate residues introduced into the chemoreceptors (methyl-accepting chemotaxis proteins or MCP) by CheR. Also mediates the irreversible deamidation of specific glutamine residues to glutamic acid. This Burkholderia lata (strain ATCC 17760 / DSM 23089 / LMG 22485 / NCIMB 9086 / R18194 / 383) protein is Protein-glutamate methylesterase/protein-glutamine glutaminase 3.